The following is a 1019-amino-acid chain: Insulin-degrading enzyme (1019 aa).

Histidine 108 is a Zn(2+) binding site. Glutamate 111 acts as the Proton acceptor in catalysis. Zn(2+) is bound by residues histidine 112 and glutamate 189. Lysine 192 bears the N6-succinyllysine mark. Residue 359–363 (LVGGQ) coordinates substrate. Arginine 429 serves as a coordination point for ATP. The residue at position 697 (lysine 697) is an N6-succinyllysine. Positions 853-858 (EKPPHY) match the SlyX motif motif. Residue 895–901 (DKPKKLS) participates in ATP binding.

The protein belongs to the peptidase M16 family. As to quaternary structure, homodimer. Can also form homotetramers. Zn(2+) serves as cofactor.

The protein localises to the cytoplasm. It localises to the cytosol. It is found in the cell membrane. Its subcellular location is the secreted. The catalysed reaction is Degradation of insulin, glucagon and other polypeptides. No action on proteins.. Its activity is regulated as follows. Activated by ATP, other nucleotide triphosphates and small peptides. Inhibited by bacitracin. In terms of biological role, plays a role in the cellular breakdown of insulin, APP peptides, IAPP peptides, natriuretic peptides, glucagon, bradykinin, kallidin, and other peptides, and thereby plays a role in intercellular peptide signaling. Substrate binding induces important conformation changes, making it possible to bind and degrade larger substrates, such as insulin. Contributes to the regulation of peptide hormone signaling cascades and regulation of blood glucose homeostasis via its role in the degradation of insulin, glucagon and IAPP. Plays a role in the degradation and clearance of APP-derived amyloidogenic peptides that are secreted by neurons and microglia. Degrades the natriuretic peptides ANP, BNP and CNP, inactivating their ability to raise intracellular cGMP. Also degrades an aberrant frameshifted 40-residue form of NPPA (fsNPPA) which is associated with familial atrial fibrillation in heterozygous patients. Involved in antigen processing. Produces both the N terminus and the C terminus of MAGEA3-derived antigenic peptide (EVDPIGHLY) that is presented to cytotoxic T lymphocytes by MHC class I. This chain is Insulin-degrading enzyme (IDE), found in Bos taurus (Bovine).